Here is a 374-residue protein sequence, read N- to C-terminus: S-adenosylmethionine:tRNA ribosyltransferase-isomerase (374 aa).

This sequence belongs to the QueA family. Monomer.

Its subcellular location is the cytoplasm. The catalysed reaction is 7-aminomethyl-7-carbaguanosine(34) in tRNA + S-adenosyl-L-methionine = epoxyqueuosine(34) in tRNA + adenine + L-methionine + 2 H(+). Its pathway is tRNA modification; tRNA-queuosine biosynthesis. Transfers and isomerizes the ribose moiety from AdoMet to the 7-aminomethyl group of 7-deazaguanine (preQ1-tRNA) to give epoxyqueuosine (oQ-tRNA). This Sorangium cellulosum (strain So ce56) (Polyangium cellulosum (strain So ce56)) protein is S-adenosylmethionine:tRNA ribosyltransferase-isomerase.